Reading from the N-terminus, the 261-residue chain is Triosephosphate isomerase (261 aa).

10-12 (NWK) serves as a coordination point for substrate. H100 serves as the catalytic Electrophile. The active-site Proton acceptor is the E172. Substrate-binding positions include G178, S218, and 239–240 (GG).

Belongs to the triosephosphate isomerase family. Homodimer.

Its subcellular location is the cytoplasm. It catalyses the reaction D-glyceraldehyde 3-phosphate = dihydroxyacetone phosphate. It participates in carbohydrate biosynthesis; gluconeogenesis. Its pathway is carbohydrate degradation; glycolysis; D-glyceraldehyde 3-phosphate from glycerone phosphate: step 1/1. In terms of biological role, involved in the gluconeogenesis. Catalyzes stereospecifically the conversion of dihydroxyacetone phosphate (DHAP) to D-glyceraldehyde-3-phosphate (G3P). This is Triosephosphate isomerase from Mycobacterium tuberculosis (strain CDC 1551 / Oshkosh).